Here is a 458-residue protein sequence, read N- to C-terminus: Exodeoxyribonuclease 7 large subunit (458 aa).

This sequence belongs to the XseA family. Heterooligomer composed of large and small subunits.

It is found in the cytoplasm. The enzyme catalyses Exonucleolytic cleavage in either 5'- to 3'- or 3'- to 5'-direction to yield nucleoside 5'-phosphates.. Functionally, bidirectionally degrades single-stranded DNA into large acid-insoluble oligonucleotides, which are then degraded further into small acid-soluble oligonucleotides. The sequence is that of Exodeoxyribonuclease 7 large subunit from Escherichia coli O6:H1 (strain CFT073 / ATCC 700928 / UPEC).